We begin with the raw amino-acid sequence, 497 residues long: Putative diacyglycerol O-acyltransferase Rv3480c (497 aa).

The active-site Proton acceptor is His143.

This sequence belongs to the long-chain O-acyltransferase family.

The enzyme catalyses an acyl-CoA + a 1,2-diacyl-sn-glycerol = a triacyl-sn-glycerol + CoA. The catalysed reaction is di-(9Z)-octadecenoylglycerol + (9Z)-octadecenoyl-CoA = 1,2,3-tri-(9Z-octadecenoyl)-glycerol + CoA. It carries out the reaction hexadecan-1-ol + hexadecanoyl-CoA = hexadecanyl hexadecanoate + CoA. It functions in the pathway glycerolipid metabolism; triacylglycerol biosynthesis. Upon expression in E.coli has a weak triacylglycerol synthase function, making triacylglycerol (TG) from diolein and long-chain fatty acyl-CoA. Also functions weakly as a wax synthase, as it incorporates palmityl alcohol into wax esters in the presence of palmitoyl-CoA. The sequence is that of Putative diacyglycerol O-acyltransferase Rv3480c from Mycobacterium tuberculosis (strain ATCC 25618 / H37Rv).